A 370-amino-acid polypeptide reads, in one-letter code: tRNA-specific 2-thiouridylase MnmA (370 aa).

ATP is bound by residues 24 to 31 and Leu-50; that span reads AMSGGVDS. Cys-119 (nucleophile) is an active-site residue. A disulfide bond links Cys-119 and Cys-215. An ATP-binding site is contributed by Gly-143. The segment at 165-167 is interaction with tRNA; the sequence is KDQ. Residue Cys-215 is the Cysteine persulfide intermediate of the active site.

The protein belongs to the MnmA/TRMU family.

Its subcellular location is the cytoplasm. It catalyses the reaction S-sulfanyl-L-cysteinyl-[protein] + uridine(34) in tRNA + AH2 + ATP = 2-thiouridine(34) in tRNA + L-cysteinyl-[protein] + A + AMP + diphosphate + H(+). Its function is as follows. Catalyzes the 2-thiolation of uridine at the wobble position (U34) of tRNA, leading to the formation of s(2)U34. In Wolbachia sp. subsp. Drosophila simulans (strain wRi), this protein is tRNA-specific 2-thiouridylase MnmA.